The sequence spans 407 residues: Patatin-like protein 2 (407 aa).

In terms of domain architecture, PNPLA spans 22–228 (LSIDGGGIRG…AANNPALLAI (207 aa)). Residues 26–31 (GGGIRG) carry the GXGXXG motif. Positions 64 to 68 (GTSTG) match the GXSXG motif. S66 serves as the catalytic Nucleophile. The active-site Proton acceptor is the D215. Residues 215–217 (DGG) carry the DGA/G motif. S398 carries the post-translational modification Phosphoserine.

This sequence belongs to the patatin family. In terms of tissue distribution, expressed specifically in roots.

It is found in the cytoplasm. Possesses non-specific lipolytic acyl hydrolase (LAH) activity. Catalyzes the hydrolysis of the galactolipids monogalactosyldiacylglycerol (MGDG) and digalactosyldiacylglycerol (DGDG), and less efficiently the phoshpolipids phosphatidylcholine (PC), phosphatidylethanolamine (PE), phosphatidylglycerol (PG), phosphatidic acid (PA), phosphatidylserine (PS) and phosphatidylinositol (PI). Favors the release of fatty acid at the sn-1 position for PC or PE and the sn-2 position for PG, PA, PS and PI. Negatively affects disease resistance to the necrotic fungal pathogen Botrytis cinerea and the avirulent bacteria Pseudomonas syringae by promoting cell death and reducing the efficiency of the hypersensitive response, respectively. However, PLP2 contributes to resistance to cucumber mosaic virus (CMV), an obligate parasite inducing hypersensitive response. May negatively regulate oxylipin production, possibly via participating in membrane repair that includes removal of oxidatively modified lipids. This Arabidopsis thaliana (Mouse-ear cress) protein is Patatin-like protein 2 (PLP2).